The primary structure comprises 407 residues: Ornithine cyclodeaminase (407 aa).

NAD(+)-binding residues include asparagine 233, alanine 234, aspartate 312, threonine 344, methionine 345, leucine 346, histidine 347, aspartate 365, aspartate 388, and valine 389.

The protein belongs to the AgrE/ArgZ ornithine cyclodeaminase family. The cofactor is NAD(+).

The enzyme catalyses L-ornithine = L-proline + NH4(+). Catalyzes the conversion of ornithine to proline, with the release of ammonia. This is Ornithine cyclodeaminase from Archaeoglobus fulgidus (strain ATCC 49558 / DSM 4304 / JCM 9628 / NBRC 100126 / VC-16).